Consider the following 324-residue polypeptide: Annexin A10 (324 aa).

4 Annexin repeats span residues 17-88 (FNPM…GLMY), 89-160 (PPPS…NLVQ), 171-243 (AMAA…AIVR), and 247-318 (DKPS…AICA).

The protein belongs to the annexin family.

The polypeptide is Annexin A10 (Anxa10) (Mus musculus (Mouse)).